Consider the following 702-residue polypeptide: Methionine--tRNA ligase (702 aa).

The short motif at 14–24 (PYANGPVHLGH) is the 'HIGH' region element. Positions 146, 149, 159, and 162 each coordinate Zn(2+). Residues 344–348 (KFSKS) carry the 'KMSKS' region motif. Lys-347 provides a ligand contact to ATP. Residues 601-702 (EFLKVDLRVA…GKEINGKKIQ (102 aa)) form the tRNA-binding domain.

Belongs to the class-I aminoacyl-tRNA synthetase family. MetG type 1 subfamily. In terms of assembly, homodimer. Requires Zn(2+) as cofactor.

It is found in the cytoplasm. The enzyme catalyses tRNA(Met) + L-methionine + ATP = L-methionyl-tRNA(Met) + AMP + diphosphate. Functionally, is required not only for elongation of protein synthesis but also for the initiation of all mRNA translation through initiator tRNA(fMet) aminoacylation. This Chlorobium phaeobacteroides (strain DSM 266 / SMG 266 / 2430) protein is Methionine--tRNA ligase.